A 57-amino-acid chain; its full sequence is Granulin-1 (57 aa).

Disulfide bonds link Cys-4-Cys-16 and Cys-10-Cys-26.

This sequence belongs to the granulin family. In terms of processing, granulins are disulfide bridged. Ubiquitous.

The protein resides in the secreted. Its function is as follows. Granulins have possible cytokine-like activity. They may play a role in inflammation, wound repair, and tissue remodeling. This Cyprinus carpio (Common carp) protein is Granulin-1.